Reading from the N-terminus, the 64-residue chain is MYKQIFLCLIIAALCATIMAEASALADADDDDDKRYVRGMASKAGAIAGKIAKVALKALGRRDS.

The signal sequence occupies residues 1-20 (MYKQIFLCLIIAALCATIMA). Positions 21-35 (EASALADADDDDDKR) are excised as a propeptide. Leu59 is subject to Leucine amide. Positions 60–64 (GRRDS) are excised as a propeptide.

This sequence belongs to the gastrin/cholecystokinin family. Magainin subfamily. Expressed by the skin glands. Synthesized in the stomach and stored in a novel granular multinucleated cell in the gastric mucosa. Stored as active, processed peptides in large granules within the granular gland secretions of the skin.

It is found in the secreted. Functionally, PGLa and PGLa-H display a broad-spectrum of antibacterial activity against a range of Gram-positive and Gram-negative bacteria. PGLa also displays antifungal activity against C.albicans ATCC 14053. PGLa-H shows moderate antibacterial activity against the multidrug-resistant methicillin-resistant S.aureus (MRSA) but exhibits very little hemolytic activity. The chain is PYLa/PGLa B (pgla-b) from Xenopus laevis (African clawed frog).